Here is a 507-residue protein sequence, read N- to C-terminus: Protein phosphatase 1J (507 aa).

Disordered regions lie at residues 1 to 102 and 197 to 220; these read MLNR…RLPW and LCLP…PQSC. The span at 14 to 23 shows a compositional bias: low complexity; sequence SSGGTSSQRS. Position 41 is a phosphothreonine (Thr41). Residues 59–73 show a composition bias toward polar residues; sequence TAETTVSFSRPTFLQ. A phosphoserine mark is found at Ser65 and Ser75. The PPM-type phosphatase domain maps to 103–499; sequence STGYAEVINA…DDISVFVIPL (397 aa). The span at 199–212 shows a compositional bias: low complexity; that stretch reads LPSTPGTPGAPSPS.

This sequence belongs to the PP2C family. Interacts with UBE2I/UBC9. Specifically expressed in the testicular germ cells.

It carries out the reaction O-phospho-L-seryl-[protein] + H2O = L-seryl-[protein] + phosphate. The catalysed reaction is O-phospho-L-threonyl-[protein] + H2O = L-threonyl-[protein] + phosphate. The chain is Protein phosphatase 1J (Ppm1j) from Mus musculus (Mouse).